The sequence spans 210 residues: LexA repressor (210 aa).

The segment at residues 31 to 51 (RAEISRELGFRSPNAAEEHLK) is a DNA-binding region (H-T-H motif). Active-site for autocatalytic cleavage activity residues include Ser-126 and Lys-163.

This sequence belongs to the peptidase S24 family. Homodimer.

It carries out the reaction Hydrolysis of Ala-|-Gly bond in repressor LexA.. Functionally, represses a number of genes involved in the response to DNA damage (SOS response), including recA and lexA. In the presence of single-stranded DNA, RecA interacts with LexA causing an autocatalytic cleavage which disrupts the DNA-binding part of LexA, leading to derepression of the SOS regulon and eventually DNA repair. The chain is LexA repressor from Actinobacillus succinogenes (strain ATCC 55618 / DSM 22257 / CCUG 43843 / 130Z).